Here is a 415-residue protein sequence, read N- to C-terminus: MELRVGNRYRLGRKIGSGSFGDIYLGTDIAAGEEVAIKLECVKTKHPQLHIESKIYKMMQGGVGIPTIRWCGAEGDYNVMVMELLGPSLEDLFNFCSRKFSLKTVLLLADQMISRIEYIHSKNFIHRDVKPDNFLMGLGKKGNLVYIIDFGLAKKYRDARTHQHIPYRENKNLTGTARYASINTHLGIEQSRRDDLESLGYVLMYFNLGSLPWQGLKAATKRQKYERISEKKMSTPIEVLCKGYPSEFATYLNFCRSLRFDDKPDYSYLRQLFRNLFHRQGFSYDYVFDWNMLKFGASRAADDAERERRDREERLRHSRNPATRGLPSTASGRLRGTQEVAPPTPLTPTSHTANTSPRPVSGMERERKVSMRLHRGAPVNVSSSDLTGRQDTSRMSTSQIPGRVASSGLQSVVHR.

Residues 9-277 (YRLGRKIGSG…YLRQLFRNLF (269 aa)) form the Protein kinase domain. ATP contacts are provided by residues 15 to 23 (IGSGSFGDI) and Lys38. Residue Asp128 is the Proton acceptor of the active site. A centrosomal localization signal (CLS) region spans residues 278 to 364 (HRQGFSYDYV…TSPRPVSGME (87 aa)). Residues 301 to 315 (ADDAERERRDREERL) show a composition bias toward basic and acidic residues. The disordered stretch occupies residues 301 to 415 (ADDAERERRD…SSGLQSVVHR (115 aa)). The segment at 317–342 (HSRNPATRGLPSTASGRLRGTQEVAP) is autoinhibitory. Ser328 and Ser331 each carry phosphoserine. The span at 347 to 358 (TPTSHTANTSPR) shows a compositional bias: polar residues. Ser370 carries the phosphoserine modification. Residue Arg375 is modified to Omega-N-methylarginine. Over residues 380 to 400 (NVSSSDLTGRQDTSRMSTSQI) the composition is skewed to polar residues. 6 positions are modified to phosphoserine: Ser382, Ser383, Ser384, Pro401, Ser407, and Ser411.

This sequence belongs to the protein kinase superfamily. CK1 Ser/Thr protein kinase family. Casein kinase I subfamily. As to quaternary structure, monomer. Component of the circadian core oscillator, which includes the CRY proteins, CLOCK, or NPAS2, BMAL1 or BMAL2, CSNK1D and/or CSNK1E, TIMELESS and the PER proteins. Interacts directly with PER1 and PER2 which may lead to their degradation. Interacts with MAP1A. Interacts with MAPT/TAU, DBNDD2, AIB1/NCOA3 and ESR1. Interacts with AKAP9/AKAP450; this interaction promotes centrosomal subcellular location. Binds to tubulins in mitotic cells upon DNA damage. Interacts with GJA1. Interacts with SNAPIN. Interacts with DNMT1. Interacts with DDX3X; this interaction enhances CSNK1D kinase activity in vitro, but it is unclear whether this interaction is physiologically relevant. Interacts with FAM83A, FAM83B, FAM83E and FAM83H (via DUF1669). In terms of processing, autophosphorylated on serine and threonine residues; this autophosphorylation represses activity. Reactivated by phosphatase-mediated dephosphorylation. May be dephosphorylated by PP1. In terms of tissue distribution, expressed ubiquitously. However, kinase activity is not uniform, with highest kinase activity in splenocytes.

It localises to the cytoplasm. The protein resides in the nucleus. The protein localises to the cytoskeleton. Its subcellular location is the microtubule organizing center. It is found in the centrosome. It localises to the perinuclear region. The protein resides in the cell membrane. The protein localises to the spindle. Its subcellular location is the golgi apparatus. It carries out the reaction L-seryl-[protein] + ATP = O-phospho-L-seryl-[protein] + ADP + H(+). The enzyme catalyses L-threonyl-[protein] + ATP = O-phospho-L-threonyl-[protein] + ADP + H(+). It catalyses the reaction L-seryl-[tau protein] + ATP = O-phospho-L-seryl-[tau protein] + ADP + H(+). The catalysed reaction is L-threonyl-[tau protein] + ATP = O-phospho-L-threonyl-[tau protein] + ADP + H(+). Exhibits substrate-dependent heparin activation. Drug-mediated inhibition leads to a delay of the oscillations with the magnitude of this effect dependent upon the timing of drug administration. Inhibited by phosphorylation. Essential serine/threonine-protein kinase that regulates diverse cellular growth and survival processes including Wnt signaling, DNA repair and circadian rhythms. It can phosphorylate a large number of proteins. Casein kinases are operationally defined by their preferential utilization of acidic proteins such as caseins as substrates. Phosphorylates connexin-43/GJA1, MAP1A, SNAPIN, MAPT/TAU, TOP2A, DCK, HIF1A, EIF6, p53/TP53, DVL2, DVL3, ESR1, AIB1/NCOA3, DNMT1, PKD2, YAP1, PER1 and PER2. Central component of the circadian clock. In balance with PP1, determines the circadian period length through the regulation of the speed and rhythmicity of PER1 and PER2 phosphorylation. Controls PER1 and PER2 nuclear transport and degradation. YAP1 phosphorylation promotes its SCF(beta-TRCP) E3 ubiquitin ligase-mediated ubiquitination and subsequent degradation. DNMT1 phosphorylation reduces its DNA-binding activity. Phosphorylation of ESR1 and AIB1/NCOA3 stimulates their activity and coactivation. Phosphorylation of DVL2 and DVL3 regulates WNT3A signaling pathway that controls neurite outgrowth. Phosphorylates NEDD9/HEF1. EIF6 phosphorylation promotes its nuclear export. Triggers down-regulation of dopamine receptors in the forebrain. Activates DCK in vitro by phosphorylation. TOP2A phosphorylation favors DNA cleavable complex formation. May regulate the formation of the mitotic spindle apparatus in extravillous trophoblast. Modulates connexin-43/GJA1 gap junction assembly by phosphorylation. Probably involved in lymphocyte physiology. Regulates fast synaptic transmission mediated by glutamate. This Mus musculus (Mouse) protein is Casein kinase I isoform delta (Csnk1d).